Here is a 334-residue protein sequence, read N- to C-terminus: Fructose-1,6-bisphosphatase class 1 (334 aa).

Residues Glu90, Asp113, Leu115, and Asp116 each contribute to the Mg(2+) site. Substrate contacts are provided by residues 116 to 119, Asn209, Tyr242, and Lys272; that span reads DGSS. Glu278 serves as a coordination point for Mg(2+).

The protein belongs to the FBPase class 1 family. In terms of assembly, homotetramer. The cofactor is Mg(2+).

The protein resides in the cytoplasm. The catalysed reaction is beta-D-fructose 1,6-bisphosphate + H2O = beta-D-fructose 6-phosphate + phosphate. The protein operates within carbohydrate biosynthesis; gluconeogenesis. The protein is Fructose-1,6-bisphosphatase class 1 of Actinobacillus pleuropneumoniae serotype 7 (strain AP76).